We begin with the raw amino-acid sequence, 353 residues long: UPF0283 membrane protein YcjF (353 aa).

A compositionally biased stretch (basic and acidic residues) spans 1–19 (MSEPLKPRIDFAEPLKEEP). The segment at 1-35 (MSEPLKPRIDFAEPLKEEPTSAFKAQQTFSEAESR) is disordered. 3 consecutive transmembrane segments (helical) span residues 70–90 (MVMG…VQWT), 100–120 (VALG…GSVV), and 213–233 (ESTL…FIAW).

This sequence belongs to the UPF0283 family.

The protein resides in the cell inner membrane. The chain is UPF0283 membrane protein YcjF from Salmonella paratyphi C (strain RKS4594).